Consider the following 344-residue polypeptide: Methionine aminopeptidase 1C, chloroplastic/mitochondrial (344 aa).

H172 serves as a coordination point for substrate. 3 residues coordinate a divalent metal cation: D189, D200, and H262. H269 contributes to the substrate binding site. Positions 296 and 327 each coordinate a divalent metal cation.

Belongs to the peptidase M24A family. Methionine aminopeptidase type 1 subfamily. Co(2+) serves as cofactor. Requires Zn(2+) as cofactor. It depends on Mn(2+) as a cofactor. Fe(2+) is required as a cofactor. As to expression, ubiquitous.

It localises to the plastid. The protein localises to the chloroplast. The protein resides in the mitochondrion. It catalyses the reaction Release of N-terminal amino acids, preferentially methionine, from peptides and arylamides.. In terms of biological role, removes the N-terminal methionine from nascent proteins. The N-terminal methionine is often cleaved when the second residue in the primary sequence is small and uncharged (Met-Ala-, Cys, Gly, Pro, Ser, Thr, or Val). This Arabidopsis thaliana (Mouse-ear cress) protein is Methionine aminopeptidase 1C, chloroplastic/mitochondrial (MAP1C).